The primary structure comprises 595 residues: Protein LUTEIN DEFICIENT 5, chloroplastic (595 aa).

The N-terminal 28 residues, 1–28, are a transit peptide targeting the chloroplast; sequence MAMAFPLSYTPTITVKPVTYSRRSNFVV. C516 contributes to the heme binding site.

This sequence belongs to the cytochrome P450 family. The cofactor is heme.

The protein resides in the plastid. It is found in the chloroplast. In terms of biological role, heme-containing cytochrome P450 involved in the biosynthesis of xanthophylls. Specific for beta-ring hydroxylation of alpha- and beta-carotene. Also has a low activity toward the epsilon-rings of alpha-carotene. The beta-ring of alpha-carotene is the preferred substrate in planta. The protein is Protein LUTEIN DEFICIENT 5, chloroplastic (CYP97A3) of Arabidopsis thaliana (Mouse-ear cress).